A 542-amino-acid polypeptide reads, in one-letter code: Chloride channel CLIC-like protein 1 (542 aa).

Positions 1 to 18 are cleaved as a signal peptide; the sequence is MLYSLLLCECLWLITAYA. Residues 19-184 are Lumenal-facing; the sequence is HDDEWIDPTD…EEFFGVDPYN (166 aa). A helical transmembrane segment spans residues 185-205; that stretch reads VFMVLLCLLCIVALVATELWT. Residues 206 to 216 lie on the Cytoplasmic side of the membrane; the sequence is YVRWYTQLKRV. Residues 217 to 237 form a helical membrane-spanning segment; sequence FFISFLISLGWNWMYLYKLAF. The Lumenal segment spans residues 238–329; sequence AQHQAEVAKM…GEFIKALMKE (92 aa). Residues 330-350 traverse the membrane as a helical segment; it reads IPVLLHIPVLIIMALAVLSFC. The Cytoplasmic portion of the chain corresponds to 351–542; it reads YGAGKSVNML…PASTAVEVCG (192 aa). A disordered region spans residues 369-394; the sequence is EAPQALQAGERRRQQKIDYRPHGGAG. Residues 377 to 389 show a composition bias toward basic and acidic residues; that stretch reads GERRRQQKIDYRP. A phosphoserine mark is found at Ser438 and Ser464. The segment at 452-542 is disordered; the sequence is AREHPKVVPG…PASTAVEVCG (91 aa). Residues 480 to 491 show a composition bias toward low complexity; sequence ESTPTESSTESS. Thr482 bears the Phosphothreonine mark. Ser532 is subject to Phosphoserine.

It belongs to the chloride channel MCLC family. As to quaternary structure, homomultimers. Interacts with mitochondrial protein PIGBOS1 (via C-terminus); the interaction occurs at the mitochondria-associated endoplasmic reticulum (ER) membrane, a zone of contact between the ER and mitochondrial membranes, but does not appear to play a role in ER-mitochondria tethering and is not affected by ER stress. Interacts with CALR.

The protein localises to the endoplasmic reticulum membrane. The catalysed reaction is chloride(in) = chloride(out). The enzyme catalyses bromide(in) = bromide(out). It catalyses the reaction nitrate(in) = nitrate(out). It carries out the reaction fluoride(in) = fluoride(out). Functionally, anion-selective channel with Ca(2+)-dependent and voltage-independent gating. Permeable to small monovalent anions with selectivity for bromide &gt; chloride &gt; nitrate &gt; fluoride. Operates in the endoplasmic reticulum (ER) membrane where it mediates chloride efflux to compensate for the loss of positive charges from the ER lumen upon Ca(2+) release. Contributes to the maintenance of ER Ca(2+) pools and activation of unfolded protein response to prevent accumulation of misfolded proteins in the ER lumen. Particularly involved in ER homeostasis mechanisms underlying motor neurons and retinal photoreceptors survival. This Bos taurus (Bovine) protein is Chloride channel CLIC-like protein 1 (CLCC1).